Consider the following 213-residue polypeptide: 3-isopropylmalate dehydratase small subunit (213 aa).

This sequence belongs to the LeuD family. LeuD type 1 subfamily. Heterodimer of LeuC and LeuD.

The enzyme catalyses (2R,3S)-3-isopropylmalate = (2S)-2-isopropylmalate. It participates in amino-acid biosynthesis; L-leucine biosynthesis; L-leucine from 3-methyl-2-oxobutanoate: step 2/4. In terms of biological role, catalyzes the isomerization between 2-isopropylmalate and 3-isopropylmalate, via the formation of 2-isopropylmaleate. In Neisseria gonorrhoeae (strain ATCC 700825 / FA 1090), this protein is 3-isopropylmalate dehydratase small subunit.